The following is a 306-amino-acid chain: Aspartate carbamoyltransferase catalytic subunit (306 aa).

Carbamoyl phosphate is bound by residues Arg55 and Thr56. Residue Lys84 coordinates L-aspartate. Carbamoyl phosphate-binding residues include Arg105, His133, and Gln136. L-aspartate contacts are provided by Arg166 and Arg227. 2 residues coordinate carbamoyl phosphate: Leu265 and Pro266.

This sequence belongs to the aspartate/ornithine carbamoyltransferase superfamily. ATCase family. Heterododecamer (2C3:3R2) of six catalytic PyrB chains organized as two trimers (C3), and six regulatory PyrI chains organized as three dimers (R2).

It carries out the reaction carbamoyl phosphate + L-aspartate = N-carbamoyl-L-aspartate + phosphate + H(+). Its pathway is pyrimidine metabolism; UMP biosynthesis via de novo pathway; (S)-dihydroorotate from bicarbonate: step 2/3. Functionally, catalyzes the condensation of carbamoyl phosphate and aspartate to form carbamoyl aspartate and inorganic phosphate, the committed step in the de novo pyrimidine nucleotide biosynthesis pathway. In Aeromonas salmonicida (strain A449), this protein is Aspartate carbamoyltransferase catalytic subunit.